Reading from the N-terminus, the 121-residue chain is Small ribosomal subunit protein uS13 (121 aa).

The interval 94–121 (DLPVRGQRTKTNARTRKGPRKSGVQLKK) is disordered. A compositionally biased stretch (basic residues) spans 100 to 121 (QRTKTNARTRKGPRKSGVQLKK).

This sequence belongs to the universal ribosomal protein uS13 family. As to quaternary structure, part of the 30S ribosomal subunit. Forms a loose heterodimer with protein S19. Forms two bridges to the 50S subunit in the 70S ribosome.

Located at the top of the head of the 30S subunit, it contacts several helices of the 16S rRNA. In the 70S ribosome it contacts the 23S rRNA (bridge B1a) and protein L5 of the 50S subunit (bridge B1b), connecting the 2 subunits; these bridges are implicated in subunit movement. Contacts the tRNAs in the A and P-sites. This is Small ribosomal subunit protein uS13 from Polynucleobacter necessarius subsp. necessarius (strain STIR1).